The following is a 186-amino-acid chain: Threonylcarbamoyl-AMP synthase (186 aa).

The YrdC-like domain occupies 2 to 186; sequence STEFEQAVAA…ARTGAVIRPS (185 aa).

Belongs to the SUA5 family. TsaC subfamily.

It is found in the cytoplasm. The enzyme catalyses L-threonine + hydrogencarbonate + ATP = L-threonylcarbamoyladenylate + diphosphate + H2O. In terms of biological role, required for the formation of a threonylcarbamoyl group on adenosine at position 37 (t(6)A37) in tRNAs that read codons beginning with adenine. Catalyzes the conversion of L-threonine, HCO(3)(-)/CO(2) and ATP to give threonylcarbamoyl-AMP (TC-AMP) as the acyladenylate intermediate, with the release of diphosphate. In Aeromonas salmonicida (strain A449), this protein is Threonylcarbamoyl-AMP synthase.